We begin with the raw amino-acid sequence, 391 residues long: AIAAVITFLILFTIFGNALVILAVLTSRSLRAPQNLFLVSLAAADILVATLIIPFSLANELLGYWYFRRTWCEVYLALDVLFCTSSIVHLCAISLDRYWAVSRALEYNSKRTPRRIKCIILTVWLIAAVISLPPLIYKGDQGPQPRGRPQCKLNQEAWYILASSIGSFFAPCLIMILVYLRIYLIAKRSHCRGPRAKGAPGKGESKQTGQASLGAPSSAKLPNLVSRLVAAREANRHSKSTGEKVEGETPEGPGTPGVPPSWPPLPSSGRGQEEDIYRASPEEEAGDDEEEECEPQAVPVSPASACSPPLQQPQGSRVLATLRGQVLLSRGVGTASGQWWRRRAQLTREKRFTFVLAVVIGVFVLCWFPFFFSYSLGAICPQHCKVPHGLF.

Residues 1–25 (AIAAVITFLILFTIFGNALVILAVL) traverse the membrane as a helical segment. At 26 to 36 (TSRSLRAPQNL) the chain is on the cytoplasmic side. A helical transmembrane segment spans residues 37 to 62 (FLVSLAAADILVATLIIPFSLANELL). Topologically, residues 63–72 (GYWYFRRTWC) are extracellular. Cys-72 and Cys-151 are disulfide-bonded. A helical transmembrane segment spans residues 73–95 (EVYLALDVLFCTSSIVHLCAISL). The Cytoplasmic portion of the chain corresponds to 96 to 117 (DRYWAVSRALEYNSKRTPRRIK). The chain crosses the membrane as a helical span at residues 118–140 (CIILTVWLIAAVISLPPLIYKGD). Residues 141-156 (QGPQPRGRPQCKLNQE) are Extracellular-facing. A helical transmembrane segment spans residues 157–180 (AWYILASSIGSFFAPCLIMILVYL). Residues 181–355 (RIYLIAKRSH…LTREKRFTFV (175 aa)) lie on the Cytoplasmic side of the membrane. 2 disordered regions span residues 194-218 (PRAKGAPGKGESKQTGQASLGAPSS) and 233-312 (EANR…PLQQ). Basic and acidic residues predominate over residues 233–247 (EANRHSKSTGEKVEG). The segment covering 256 to 266 (PGVPPSWPPLP) has biased composition (pro residues). Basic and acidic residues predominate over residues 271 to 281 (GQEEDIYRASP). Acidic residues predominate over residues 282–294 (EEEAGDDEEEECE). Residues 295-309 (PQAVPVSPASACSPP) show a composition bias toward low complexity. A helical membrane pass occupies residues 356 to 379 (LAVVIGVFVLCWFPFFFSYSLGAI). Over 380-388 (CPQHCKVPH) the chain is Extracellular. A helical transmembrane segment spans residues 389-391 (GLF).

The protein belongs to the G-protein coupled receptor 1 family. Adrenergic receptor subfamily. ADRA2B sub-subfamily. As to quaternary structure, interacts with RAB26. Interacts with PPP1R9B. Interacts with GGA1, GGA2 and GGA3.

The protein resides in the cell membrane. In terms of biological role, alpha-2 adrenergic receptors mediate the catecholamine-induced inhibition of adenylate cyclase through the action of G proteins. This Erinaceus europaeus (Western European hedgehog) protein is Alpha-2B adrenergic receptor (ADRA2B).